A 204-amino-acid polypeptide reads, in one-letter code: dITP/XTP pyrophosphatase (204 aa).

A substrate-binding site is contributed by 7 to 12 (TNNKDK). The Mg(2+) site is built by aspartate 38 and aspartate 74. Catalysis depends on aspartate 74, which acts as the Proton acceptor. Substrate contacts are provided by residues serine 75, 156 to 159 (FGYD), lysine 179, and 184 to 185 (HR).

It belongs to the HAM1 NTPase family. As to quaternary structure, homodimer. It depends on Mg(2+) as a cofactor.

The enzyme catalyses XTP + H2O = XMP + diphosphate + H(+). It carries out the reaction dITP + H2O = dIMP + diphosphate + H(+). It catalyses the reaction ITP + H2O = IMP + diphosphate + H(+). Functionally, pyrophosphatase that catalyzes the hydrolysis of nucleoside triphosphates to their monophosphate derivatives, with a high preference for the non-canonical purine nucleotides XTP (xanthosine triphosphate), dITP (deoxyinosine triphosphate) and ITP. Seems to function as a house-cleaning enzyme that removes non-canonical purine nucleotides from the nucleotide pool, thus preventing their incorporation into DNA/RNA and avoiding chromosomal lesions. This Campylobacter fetus subsp. fetus (strain 82-40) protein is dITP/XTP pyrophosphatase.